The sequence spans 338 residues: MLGRCFPPDTKEKQQLRMTKLCDPAESELSPFLITLILAVLLAEYLIGIIANGFIMAIHAAEWVQNKAVSTSGRILVFLSVSRIALQSLMMLEITISSTSLSFYSEDAVYYAFKISFIFLNFCSLWFAAWLSFFYFVKIANFSYPLFLKLRWRITGLIPWLLWLSVFISFSHSMFCINIXTVYCNNSFPIHSSNSTKKTYLSEINVVGLAFFFNLGIVTPLIMFILTATLLILSLKRHTLHMGSNATGSNDPSMEAHMGAIKATSYFLILYIFNAVALFIYLSNMFDINSLWNNLCQIIMAAYPASHSILLIQDNPGLRRAWKRLQLRLHLYPKEWTL.

Residues 1 to 30 (MLGRCFPPDTKEKQQLRMTKLCDPAESELS) are Extracellular-facing. Residues 31–51 (PFLITLILAVLLAEYLIGIIA) form a helical membrane-spanning segment. Over 52–74 (NGFIMAIHAAEWVQNKAVSTSGR) the chain is Cytoplasmic. A helical transmembrane segment spans residues 75-95 (ILVFLSVSRIALQSLMMLEIT). The Extracellular portion of the chain corresponds to 96–116 (ISSTSLSFYSEDAVYYAFKIS). The chain crosses the membrane as a helical span at residues 117-137 (FIFLNFCSLWFAAWLSFFYFV). Topologically, residues 138-156 (KIANFSYPLFLKLRWRITG) are cytoplasmic. Residues 157-177 (LIPWLLWLSVFISFSHSMFCI) traverse the membrane as a helical segment. Topologically, residues 178–205 (NIXTVYCNNSFPIHSSNSTKKTYLSEIN) are extracellular. Asn185 and Asn194 each carry an N-linked (GlcNAc...) asparagine glycan. A helical membrane pass occupies residues 206-226 (VVGLAFFFNLGIVTPLIMFIL). Topologically, residues 227–262 (TATLLILSLKRHTLHMGSNATGSNDPSMEAHMGAIK) are cytoplasmic. Residues 263-283 (ATSYFLILYIFNAVALFIYLS) traverse the membrane as a helical segment. Topologically, residues 284-291 (NMFDINSL) are extracellular. A helical transmembrane segment spans residues 292–312 (WNNLCQIIMAAYPASHSILLI). Topologically, residues 313–338 (QDNPGLRRAWKRLQLRLHLYPKEWTL) are cytoplasmic.

It belongs to the G-protein coupled receptor T2R family.

The protein localises to the membrane. Its function is as follows. Receptor that may play a role in the perception of bitterness and is gustducin-linked. May play a role in sensing the chemical composition of the gastrointestinal content. The activity of this receptor may stimulate alpha gustducin, mediate PLC-beta-2 activation and lead to the gating of TRPM5. This chain is Taste receptor type 2 member 39 (TAS2R39), found in Gorilla gorilla gorilla (Western lowland gorilla).